The primary structure comprises 208 residues: UPF0637 protein BcerKBAB4_3786 (208 aa).

The protein belongs to the UPF0637 family.

The sequence is that of UPF0637 protein BcerKBAB4_3786 from Bacillus mycoides (strain KBAB4) (Bacillus weihenstephanensis).